The chain runs to 142 residues: Large ribosomal subunit protein uL13 (142 aa).

The protein belongs to the universal ribosomal protein uL13 family. In terms of assembly, part of the 50S ribosomal subunit.

Its function is as follows. This protein is one of the early assembly proteins of the 50S ribosomal subunit, although it is not seen to bind rRNA by itself. It is important during the early stages of 50S assembly. In Aliivibrio salmonicida (strain LFI1238) (Vibrio salmonicida (strain LFI1238)), this protein is Large ribosomal subunit protein uL13.